The primary structure comprises 469 residues: Putative dipeptidase SAUSA300_1697 (469 aa).

Position 84 (His84) interacts with Zn(2+). The active site involves Asp86. Asp115 provides a ligand contact to Zn(2+). Glu149 serves as the catalytic Proton acceptor. The Zn(2+) site is built by Glu150, Asp173, and His440.

It belongs to the peptidase M20A family. Requires Zn(2+) as cofactor.

The chain is Putative dipeptidase SAUSA300_1697 from Staphylococcus aureus (strain USA300).